We begin with the raw amino-acid sequence, 1137 residues long: Eukaryotic translation initiation factor 3 subunit A (1137 aa).

The PCI domain maps to 319 to 501 (LQRMAAHVLL…NSIYFGTDLT (183 aa)). Basic and acidic residues-rich tracts occupy residues 588–623 (QNNA…EERE) and 829–899 (AAEE…RGGD). Disordered stretches follow at residues 588 to 631 (QNNA…QNEI) and 829 to 1137 (AAEE…VKRR). A Phosphoserine modification is found at serine 908. 4 stretches are compositionally biased toward basic and acidic residues: residues 922 to 971 (RGIE…EPDS), 985 to 1046 (SRDE…EPQR), 1054 to 1083 (DAPR…RGDQ), and 1106 to 1127 (AREE…KAAD).

This sequence belongs to the eIF-3 subunit A family. Component of the eukaryotic translation initiation factor 3 (eIF-3) complex. The eIF-3 complex interacts with pix.

Its subcellular location is the cytoplasm. In terms of biological role, RNA-binding component of the eukaryotic translation initiation factor 3 (eIF-3) complex, which is involved in protein synthesis of a specialized repertoire of mRNAs and, together with other initiation factors, stimulates binding of mRNA and methionyl-tRNAi to the 40S ribosome. The eIF-3 complex specifically targets and initiates translation of a subset of mRNAs involved in cell proliferation. The protein is Eukaryotic translation initiation factor 3 subunit A of Drosophila yakuba (Fruit fly).